Consider the following 469-residue polypeptide: UDP-N-acetylmuramoylalanine--D-glutamate ligase (469 aa).

Residue 110-116 (GTNGKST) participates in ATP binding.

It belongs to the MurCDEF family.

It localises to the cytoplasm. The enzyme catalyses UDP-N-acetyl-alpha-D-muramoyl-L-alanine + D-glutamate + ATP = UDP-N-acetyl-alpha-D-muramoyl-L-alanyl-D-glutamate + ADP + phosphate + H(+). Its pathway is cell wall biogenesis; peptidoglycan biosynthesis. In terms of biological role, cell wall formation. Catalyzes the addition of glutamate to the nucleotide precursor UDP-N-acetylmuramoyl-L-alanine (UMA). This Synechococcus sp. (strain JA-3-3Ab) (Cyanobacteria bacterium Yellowstone A-Prime) protein is UDP-N-acetylmuramoylalanine--D-glutamate ligase.